The sequence spans 1370 residues: DNA-directed RNA polymerase subunit beta (1370 aa).

This sequence belongs to the RNA polymerase beta chain family. In terms of assembly, the RNAP catalytic core consists of 2 alpha, 1 beta, 1 beta' and 1 omega subunit. When a sigma factor is associated with the core the holoenzyme is formed, which can initiate transcription.

The enzyme catalyses RNA(n) + a ribonucleoside 5'-triphosphate = RNA(n+1) + diphosphate. Its function is as follows. DNA-dependent RNA polymerase catalyzes the transcription of DNA into RNA using the four ribonucleoside triphosphates as substrates. This chain is DNA-directed RNA polymerase subunit beta, found in Bordetella bronchiseptica (strain ATCC BAA-588 / NCTC 13252 / RB50) (Alcaligenes bronchisepticus).